The primary structure comprises 169 residues: Secreted RxLR effector protein BLN03 (169 aa).

The N-terminal stretch at M1–A21 is a signal peptide. The dEER signature appears at T51–R54. The helical transmembrane segment at G149 to V169 threads the bilayer.

It belongs to the RxLR effector family. Interacts with host transcription factor NAC069.

The protein localises to the secreted. It is found in the host membrane. Its function is as follows. Secreted effector that inhibits stress-induced relocalization of the endoplasmic reticulum tail-anchored transcription factors to the nucleus, thus affecting stress responses. This Bremia lactucae (Lettuce downy mildew) protein is Secreted RxLR effector protein BLN03.